The sequence spans 311 residues: Probable cysteine synthase (311 aa).

Lysine 45 bears the N6-(pyridoxal phosphate)lysine mark. Pyridoxal 5'-phosphate is bound by residues asparagine 75, 182–186 (GTGGT), and serine 270.

The protein belongs to the cysteine synthase/cystathionine beta-synthase family. It depends on pyridoxal 5'-phosphate as a cofactor.

It carries out the reaction O-acetyl-L-serine + hydrogen sulfide = L-cysteine + acetate. Its pathway is amino-acid biosynthesis; L-cysteine biosynthesis; L-cysteine from L-serine: step 2/2. This is Probable cysteine synthase (ytkP) from Bacillus subtilis (strain 168).